A 2364-amino-acid chain; its full sequence is Cytotoxin-L (2364 aa).

Positions 1-91 (MNLVNKAQLQ…EVLELKNNSL (91 aa)) are four-helical bundle. In terms of domain architecture, GT44 spans 96-468 (KNLHFIWIGG…APDVRSTINL (373 aa)). The glucosyltransferase region stretch occupies residues 96–468 (KNLHFIWIGG…APDVRSTINL (373 aa)). UDP-alpha-D-glucose-binding positions include 101 to 103 (IWI), Asn-139, 265 to 270 (LAAASD), and 286 to 288 (DVD). 3 residues coordinate Mg(2+): Asp-288, Glu-515, and Ser-518. 518-520 (SLW) contributes to the UDP-alpha-D-glucose binding site. The autoprocessing region stretch occupies residues 544-799 (GEDDNLDFAQ…KSKYLHELST (256 aa)). The Zn(2+) site is built by Glu-545 and Asp-546. The Peptidase C80 domain maps to 567-774 (LSSMKTRNKE…EESIIKDISS (208 aa)). 3 residues coordinate 1D-myo-inositol hexakisphosphate: Tyr-577, Lys-600, and Lys-647. Zn(2+) is bound at residue His-653. His-653 (for protease activity) is an active-site residue. Catalysis depends on Cys-698, which acts as the Nucleophile; for protease activity. His-757 contributes to the Zn(2+) binding site. Lys-764, Lys-775, and Lys-792 together coordinate 1D-myo-inositol hexakisphosphate. A translocation region region spans residues 800–1500 (LLQEIRNNAN…ESIIRNIYMP (701 aa)). Interaction with host SEMA6A and SEMA6B stretches follow at residues 1433–1438 (CMKLIE), 1466–1471 (DNETKY), 1484–1495 (FTAEFSNESIIR), 1504–1511 (NLFIYSSK), and 1596–1601 (YNNLDP). 20 Cell wall-binding repeats span residues 1813 to 1832 (EFGLVSLDNDYFYINSFGNM), 1833 to 1852 (VSGLIYINDSLYYFKPPKNN), 1854 to 1873 (ITGFTTIDGNKYYFDPTKSG), 1876 to 1895 (SIGEITIDGKDYYFNKQGIL), 1926 to 1945 (FIGKLNIDGKIYYFEDNYRA), 1946 to 1965 (AVEWKLLDDETYYFNPKTGE), 1967 to 1986 (LKGLHQIGDNKYYFDDNGIM), 1987 to 2006 (QTGFITINDKVFYFNNDGVM), 2007 to 2026 (QVGYIEVNGKYFYFGKNGER), 2057 to 2076 (YNGILNFNGKIYFFDISNTA), 2077 to 2097 (VVGWGTLDDGSTYYFDDNTAE), 2099 to 2118 (CIGLTVINDCKYYFDDNGIR), 2119 to 2138 (QLGFITINDNIFYFSESGKI), 2139 to 2158 (ELGYQNINGNYFYIDESGLV), 2209 to 2224 (ETGWIENETDKYYFDP), 2227 to 2249 (KKAYKGINVVDDIKYYFDENGIM), 2250 to 2269 (RTGLISFENNNYYFNEDGKM), 2270 to 2289 (QFGYLNIKDKMFYFGKDGKM), 2320 to 2339 (YTGWLDLDGKRYYFTDEYIA), and 2340 to 2359 (ATGSLTIDGYNYYFDPDTAE). The segment at 1835 to 2364 (GLIYINDSLY…PDTAELVVSE (530 aa)) is receptor-binding (CROPS) region.

Belongs to the clostridial glucosylating toxin (LCGT) family. Homomultimer; forms an inactive homomultimer at pH 8, which dissociates at pH 4, leading to cytotoxicity. Interacts with host SEMA6A; interaction promotes toxin entry into host cell. Interacts with host SEMA6B; interaction promotes toxin entry into host cell. Zn(2+) is required as a cofactor. The cofactor is Mn(2+). It depends on Mg(2+) as a cofactor. Undergoes autocatalytic cleavage to release the N-terminal part (Glucosyltransferase TcsL), which constitutes the active part of the toxin, in the host cytosol. 1D-myo-inositol hexakisphosphate-binding (InsP6) activates the peptidase C80 domain and promotes autoprocessing.

It is found in the secreted. Its subcellular location is the host endosome membrane. It localises to the host cytoplasm. The protein resides in the host cytosol. The protein localises to the host cell membrane. It catalyses the reaction L-threonyl-[protein] + UDP-alpha-D-glucose = 3-O-(alpha-D-glucosyl)-L-threonyl-[protein] + UDP + H(+). Protease activity is activated upon binding to 1D-myo-inositol hexakisphosphate (InsP6), which induces conformational reorganization. Precursor of a cytotoxin that targets the vascular endothelium, inducing an anti-inflammatory effect and resulting in lethal toxic shock syndrome. TcsL constitutes the main toxin that mediates the pathology of P.sordellii infection, an anaerobic Gram-positive bacterium found in soil and in the gastrointestinal and vaginal tracts of animals and humans; although the majority of carriers are asymptomatic, pathogenic P.sordellii infections arise rapidly and are highly lethal. This form constitutes the precursor of the toxin: it enters into host cells and mediates autoprocessing to release the active toxin (Glucosyltransferase TcsL) into the host cytosol. Targets vascular endothelium by binding to the semaphorin proteins SEMA6A and SEMA6B, and enters host cells via clathrin-mediated endocytosis. Once entered into host cells, acidification in the endosome promotes the membrane insertion of the translocation region and formation of a pore, leading to translocation of the GT44 and peptidase C80 domains across the endosomal membrane. This activates the peptidase C80 domain and autocatalytic processing, releasing the N-terminal part (Glucosyltransferase TcsL), which constitutes the active part of the toxin, in the cytosol. Functionally, active form of the toxin, which is released into the host cytosol following autoprocessing and inactivates small GTPases. Acts by mediating monoglucosylation of small GTPases of the Ras (H-Ras/HRAS, K-Ras/KRAS and N-Ras/NRAS) family in host cells at the conserved threonine residue located in the switch I region ('Thr-37/35'), using UDP-alpha-D-glucose as the sugar donor. Also able to catalyze monoglucosylation of some members of the Rho family (Rac1 and Rap2A), but with less efficiency than with Ras proteins. Monoglucosylation of host small GTPases completely prevents the recognition of the downstream effector, blocking the GTPases in their inactive form and leading to apoptosis. Induces an anti-inflammatory effect, mainly by inactivating Ras proteins which results in blockage of the cell cycle and killing of immune cells. The absence or moderate local inflammatory response allows C.sordellii spreading in deep tissues, production of toxin which is released in the general circulation and causes a toxic shock syndrome. In Paraclostridium sordellii (strain ATCC 9714 / DSM 2141 / JCM 3814 / LMG 15708 / NCIMB 10717 / 211) (Clostridium sordellii), this protein is Cytotoxin-L.